The primary structure comprises 192 residues: ER protein translocation subcomplex subunit sec67 (192 aa).

Component of the heterotetrameric Sec62/63complex composed of sec62, sec63, sec66 and sec72. The Sec62/63 complex associates with the Sec61 complex to form the Sec complex.

It is found in the cytoplasm. Its subcellular location is the nucleus. Functionally, acts as a non-essential component of the Sec62/63 complex which is involved in SRP-independent post-translational translocation across the endoplasmic reticulum (ER) and functions together with the Sec61 complex and bip1 in a channel-forming translocon complex. A cycle of assembly and disassembly of Sec62/63 complex from sec61 may govern the activity of the translocon. sec72 may be involved in signal peptide recognition for a defined subset of leader peptides, or may increase the efficiency of unusual or 'difficult' secretory precursors to the translocation pore, it may be that this protein binds charged leader peptides to the membrane until they engage the translocation apparatus. This Schizosaccharomyces pombe (strain 972 / ATCC 24843) (Fission yeast) protein is ER protein translocation subcomplex subunit sec67 (sec67).